A 445-amino-acid chain; its full sequence is Tubulin beta-3 chain (445 aa).

GTP contacts are provided by glutamine 11, glutamate 69, serine 138, glycine 142, threonine 143, glycine 144, asparagine 204, and asparagine 226. Glutamate 69 is a Mg(2+) binding site. The segment covering 417–426 (DLVSEYQQYQ) has biased composition (polar residues). A disordered region spans residues 417 to 445 (DLVSEYQQYQEASADDEADEFDEEEGDEE). A compositionally biased stretch (acidic residues) spans 429-445 (SADDEADEFDEEEGDEE).

This sequence belongs to the tubulin family. As to quaternary structure, dimer of alpha and beta chains. A typical microtubule is a hollow water-filled tube with an outer diameter of 25 nm and an inner diameter of 15 nM. Alpha-beta heterodimers associate head-to-tail to form protofilaments running lengthwise along the microtubule wall with the beta-tubulin subunit facing the microtubule plus end conferring a structural polarity. Microtubules usually have 13 protofilaments but different protofilament numbers can be found in some organisms and specialized cells. Mg(2+) is required as a cofactor.

It localises to the cytoplasm. The protein resides in the cytoskeleton. Its function is as follows. Tubulin is the major constituent of microtubules, a cylinder consisting of laterally associated linear protofilaments composed of alpha- and beta-tubulin heterodimers. Microtubules grow by the addition of GTP-tubulin dimers to the microtubule end, where a stabilizing cap forms. Below the cap, tubulin dimers are in GDP-bound state, owing to GTPase activity of alpha-tubulin. The chain is Tubulin beta-3 chain (TUBB3) from Oomycete-like sp. (strain MacKay2000).